The sequence spans 816 residues: Leucine--tRNA ligase (816 aa).

The 'HIGH' region motif lies at 40 to 51 (SYPSGAQLHAGH). The short motif at 576-580 (KMSKS) is the 'KMSKS' region element. Position 579 (lysine 579) interacts with ATP.

This sequence belongs to the class-I aminoacyl-tRNA synthetase family.

The protein resides in the cytoplasm. It carries out the reaction tRNA(Leu) + L-leucine + ATP = L-leucyl-tRNA(Leu) + AMP + diphosphate. The sequence is that of Leucine--tRNA ligase from Clostridium beijerinckii (strain ATCC 51743 / NCIMB 8052) (Clostridium acetobutylicum).